Reading from the N-terminus, the 461-residue chain is Lysosomal proton-coupled steroid conjugate and bile acid symporter SLC46A3 (461 aa).

The signal sequence occupies residues 1-25; the sequence is MKISFIEPAILLYAFAMTLTIPLTA. The Extracellular segment spans residues 26-70; sequence QYVYRRIWEETGNYTFTSSSNVSECEQNKSSSTFAFQEEVQKKAS. N-linked (GlcNAc...) asparagine glycans are attached at residues N38, N46, and N53. The helical transmembrane segment at 71 to 91 threads the bilayer; it reads LFSLQVEISGLIPGLVSTFML. At 92–103 the chain is on the cytoplasmic side; the sequence is LSSSDNHGRKLP. A helical transmembrane segment spans residues 104-124; the sequence is MVLSSLGSLGTNLWLCAMSYF. Topologically, residues 125–135 are extracellular; the sequence is DLPLQLLVAST. The helical transmembrane segment at 136–156 threads the bilayer; the sequence is FIGALFGNYTTFWGACFAYIV. At 157 to 170 the chain is on the cytoplasmic side; the sequence is DQEKEYKHRIIRIA. Residues 171–191 form a helical membrane-spanning segment; sequence VLDFMLGVVTGLTGLSSGYFI. Residues 192–197 lie on the Extracellular side of the membrane; the sequence is RELGFA. A helical transmembrane segment spans residues 198–218; sequence WSYFIIAVVVLVNLAYILFFL. Residues 219 to 260 lie on the Cytoplasmic side of the membrane; the sequence is SDPIKESSSQIVTMSCSESLKDLFYRTYMLFKNGSCKRRSLL. A helical transmembrane segment spans residues 261–281; the sequence is CLLIFTLVVYFFVVFGITPVF. Over 282–301 the chain is Extracellular; the sequence is TLYELGPPLCWNEVYIGYGS. A helical transmembrane segment spans residues 302–322; that stretch reads ALGSLSFLSSFLGIWLFSYCL. The Cytoplasmic portion of the chain corresponds to 323 to 324; sequence KD. The chain crosses the membrane as a helical span at residues 325 to 345; sequence IHIAYVGIFTTMVGMMLTAFT. Residues 346-347 lie on the Extracellular side of the membrane; that stretch reads RT. A helical transmembrane segment spans residues 348 to 368; sequence TLMMFLVRISFFFTIMPLSIL. Over 369–381 the chain is Cytoplasmic; sequence RSMLSKVVHSTEQ. A helical membrane pass occupies residues 382-402; that stretch reads GVLFACIAFLETLGGVTSTSA. Residues 403–415 are Extracellular-facing; that stretch reads YNGIYSATVAWYP. A helical membrane pass occupies residues 416 to 436; sequence GFVFLLSAGLLVLPAVSLCMV. The Cytoplasmic portion of the chain corresponds to 437-461; that stretch reads KCIGWEEGSYTLLIHDEPSEHTSDS. A Tyrosine-based lysosomal-sorting motif motif is present at residues 446–449; the sequence is YTLL.

It belongs to the major facilitator superfamily. SLC46A family.

The protein localises to the lysosome membrane. It carries out the reaction estrone 3-sulfate(out) + n H(+)(out) = estrone 3-sulfate(in) + n H(+)(in). The catalysed reaction is 25-hydroxyvitamin D3 sulfate(out) + n H(+)(out) = 25-hydroxyvitamin D3 sulfate(in) + n H(+)(in). The enzyme catalyses cholate(out) + n H(+)(out) = cholate(in) + n H(+)(in). It catalyses the reaction glycocholate(out) + n H(+)(out) = glycocholate(in) + n H(+)(in). It carries out the reaction taurocholate(out) + n H(+)(out) = taurocholate(in) + n H(+)(in). The catalysed reaction is dehydroepiandrosterone 3-sulfate(out) + n H(+)(out) = dehydroepiandrosterone 3-sulfate(in) + n H(+)(in). The enzyme catalyses N-acetyl-D-muramoyl-L-alanyl-D-isoglutamine(out) + n H(+)(out) = N-acetyl-D-muramoyl-L-alanyl-D-isoglutamine(in) + n H(+)(in). It catalyses the reaction 2',3'-cGAMP(out) + n H(+)(out) = 2',3'-cGAMP(in) + n H(+)(in). Lysosomal proton-coupled steroid conjugate and bile acid transporter. Preferentially recognizes lipophilic steroid conjugates or bile acis as endogenous substrates and seems to mediate escape from lysosomes to the cytoplasm. Modulates hepatic cytosolic copper homeostasis, maybe acting as a lysosomal copper transporter and sequestering copper ions in the lysosome. Delivers pathogen-associated molecular patterns to cytosolic pattern recognition receptors as part of the innate immune response to microbes. Selectively transports bacterial muramyl dipeptide (MDP) into the cytosol for recognition by NOD2, triggering inflammatory responses. Likely acts as a redundant importer of cyclic GMP-AMP dinucleotides (cGAMPs) in monocyte and macrophage cell lineages. The transport mechanism, its electrogenicity and stoichiometry remain to be elucidated. The chain is Lysosomal proton-coupled steroid conjugate and bile acid symporter SLC46A3 (Slc46a3) from Rattus norvegicus (Rat).